A 254-amino-acid polypeptide reads, in one-letter code: MAIANKNIIFVAGLGGIGFDTSREIVKSGPKNLVILDRIENPAAIAELKALNPKVTVTFYPYDVTVPVAETTKLLKTIFDKLKTVDLLINGAGILDDYQIERTIAVNFTGTVNTTTAIMSFWDKRKGGPGGVIANICSVTGFNAIYQVPVYSASKAAALSFTNSLAKLAPITGVTAYSINPGITKTTLVHKFNSWLDVEPRVAELLLEHPTQTSLECAQNFVKAIEANQNGAIWKLDLGTLEAIEWTKHWDSHI.

10–33 contacts NAD(+); the sequence is FVAGLGGIGFDTSREIVKSGPKNL. A substrate-binding site is contributed by Ser-138. Tyr-151 serves as the catalytic Proton acceptor.

The protein belongs to the short-chain dehydrogenases/reductases (SDR) family. As to quaternary structure, homodimer.

The catalysed reaction is a primary alcohol + NAD(+) = an aldehyde + NADH + H(+). It catalyses the reaction a secondary alcohol + NAD(+) = a ketone + NADH + H(+). This Drosophila navojoa (Fruit fly) protein is Alcohol dehydrogenase 1 (Adh1).